Here is a 177-residue protein sequence, read N- to C-terminus: Inner membrane protein p22 (177 aa).

Over 1-7 (MFNIKMT) the chain is Intravirion. A helical membrane pass occupies residues 8–28 (ISTLLIALIILVIIILVVFLY). The Virion surface segment spans residues 29–177 (YKKQQPPKKV…IALPRNHKHA (149 aa)).

The protein belongs to the asfivirus inner membrane protein p22 family.

It is found in the virion membrane. It localises to the host cell membrane. The chain is Inner membrane protein p22 from Ornithodoros (relapsing fever ticks).